A 710-amino-acid chain; its full sequence is Lactoperoxidase (710 aa).

The N-terminal stretch at 1–23 (MKVLLHLPALLASLTLLQTAASA) is a signal peptide. The propeptide occupies 24–80 (SDDPTAETDIIHDTVEEVKVWVNKAFLDSRDRLKMAMTTKIHSTRHLSDYLKHAKGR). A disulfide bond links cysteine 130 and cysteine 143. A heme b-binding site is contributed by aspartate 223. The active-site Proton acceptor is histidine 224. Aspartate 225 is a Ca(2+) binding site. Intrachain disulfides connect cysteine 244-cysteine 254 and cysteine 248-cysteine 272. The Ca(2+) site is built by threonine 299, phenylalanine 301, aspartate 303, and serine 305. Serine 313 bears the Phosphoserine mark. A disulfide bond links cysteine 352 and cysteine 363. 2 residues coordinate heme b: glutamate 373 and histidine 466. Position 480 is a 3'-nitrotyrosine (tyrosine 480). Intrachain disulfides connect cysteine 571/cysteine 628 and cysteine 669/cysteine 694.

This sequence belongs to the peroxidase family. Ca(2+) is required as a cofactor. It depends on heme b as a cofactor. As to expression, expressed in the colon, including colonocytes and mucin-containing goblet cells. Not detected in the ileum.

The protein localises to the secreted. It is found in the cytoplasm. It carries out the reaction 2 a phenolic donor + H2O2 = 2 a phenolic radical donor + 2 H2O. It catalyses the reaction thiocyanate + H2O2 + H(+) = hypothiocyanous acid + H2O. The catalysed reaction is iodide + H2O2 = hypoiodite + H2O. Functionally, heme-containing oxidoreductase which catalyzes the conversion of thiocyanate (SCN(-)) into antimicrobial agent hypothiocyanous acid (OSCN(-)) in the presence of hydrogen peroxide (H2O2). Also involved in the conversion of iodide (I(-)) into hypoiodite (IO(-)) in the presence of H2O2. Responsible for the inactivation of a wide range of micro-organisms and hence, important component of defense mechanism. May be implicated in airway host defense against infection. May contribute to maintaining an appropriate H2O2 cellular level, therefore protecting cells from H2O2-caused injuries and inflammation. This chain is Lactoperoxidase, found in Mus musculus (Mouse).